We begin with the raw amino-acid sequence, 312 residues long: Very-long-chain 3-oxoacyl-CoA reductase (312 aa).

A helical transmembrane segment spans residues 4–24 (ALPAAGFLYWVGASTVAYLAL). 50 to 79 (GEWAVVTGGTDGIGKSYAEELAKRGMKIVL) contacts NADP(+). A run of 2 helical transmembrane segments spans residues 182-202 (GAIL…LTIY) and 271-291 (GYPI…WLYF). Ser-189 is a substrate binding site. The active-site Proton acceptor is the Tyr-202. The Di-lysine motif motif lies at 308–312 (KMKMN).

The protein belongs to the short-chain dehydrogenases/reductases (SDR) family. 17-beta-HSD 3 subfamily.

The protein resides in the endoplasmic reticulum membrane. It catalyses the reaction a very-long-chain (3R)-3-hydroxyacyl-CoA + NADP(+) = a very-long-chain 3-oxoacyl-CoA + NADPH + H(+). The enzyme catalyses 17beta-estradiol + NAD(+) = estrone + NADH + H(+). It carries out the reaction 17beta-estradiol + NADP(+) = estrone + NADPH + H(+). The catalysed reaction is 3-oxooctadecanoyl-CoA + NADPH + H(+) = (3R)-hydroxyoctadecanoyl-CoA + NADP(+). It catalyses the reaction (7Z,10Z,13Z,16Z)-3-oxodocosatetraenoyl-CoA + NADPH + H(+) = (3R)-hydroxy-(7Z,10Z,13Z,16Z)-docosatetraenoyl-CoA + NADP(+). The enzyme catalyses 3-oxo-(7Z,10Z,13Z,16Z,19Z)-docosapentaenoyl-CoA + NADPH + H(+) = (3R)-hydroxy-(7Z,10Z,13Z,16Z,19Z)-docosapentaenoyl-CoA + NADP(+). It carries out the reaction (8Z,11Z,14Z)-3-oxoeicosatrienoyl-CoA + NADPH + H(+) = (3R)-hydroxy-(8Z,11Z,14Z)-eicosatrienoyl-CoA + NADP(+). It participates in lipid metabolism; fatty acid biosynthesis. It functions in the pathway steroid biosynthesis; estrogen biosynthesis. Its function is as follows. Catalyzes the second of the four reactions of the long-chain fatty acids elongation cycle. This endoplasmic reticulum-bound enzymatic process, allows the addition of two carbons to the chain of long- and very long-chain fatty acids/VLCFAs per cycle. This enzyme has a 3-ketoacyl-CoA reductase activity, reducing 3-ketoacyl-CoA to 3-hydroxyacyl-CoA, within each cycle of fatty acid elongation. Thereby, it may participate in the production of VLCFAs of different chain lengths that are involved in multiple biological processes as precursors of membrane lipids and lipid mediators. May also catalyze the transformation of estrone (E1) into estradiol (E2) and play a role in estrogen formation. In Bos taurus (Bovine), this protein is Very-long-chain 3-oxoacyl-CoA reductase (HSD17B12).